Consider the following 266-residue polypeptide: Type II iodothyronine deiodinase (266 aa).

At Met1–Leu9 the chain is on the lumenal side. The helical; Signal-anchor for type III membrane protein transmembrane segment at Ile10–Leu34 threads the bilayer. Topologically, residues Lys35–Asp266 are cytoplasmic. Residue Sec130 is part of the active site. 2 non-standard amino acids (selenocysteine) are found at residues Sec130 and Sec263.

It belongs to the iodothyronine deiodinase family. As to quaternary structure, predominantly monomer. Can form homodimers but homodimerization is not essential for enzyme activity. Interacts with USP20 and USP33. Interacts with MARCHF6. Post-translationally, ubiquitinated by MARCHF6, leading to its degradation by the proteasome. Deubiquitinated by USP20 and USP33. Expressed in cerebral cortex, cerebellum, pituitary gland, mostly in anterior pituitary gland, and pineal gland, as well as in brown adipose tissue (BAT).

Its subcellular location is the endoplasmic reticulum membrane. The enzyme catalyses 3,3',5-triiodo-L-thyronine + iodide + A + H(+) = L-thyroxine + AH2. The catalysed reaction is 3,3'-diiodo-L-thyronine + iodide + A + H(+) = 3,3',5'-triiodo-L-thyronine + AH2. It carries out the reaction 3'-iodo-L-thyronine + iodide + A + H(+) = 3',5'-diiodo-L-thyronine + AH2. It catalyses the reaction 3,3'-diiodothyronamine + iodide + A + H(+) = 3,3',5'-triiodothyronamine + AH2. The enzyme catalyses 3'-iodothyronamine + iodide + A + H(+) = 3',5'-diiodothyronamine + AH2. Its function is as follows. Plays a crucial role in the metabolism of thyroid hormones (TH) and has specific roles in TH activation and inactivation by deiodination. Catalyzes the deiodination of L-thyroxine (T4) to 3,5,3'-triiodothyronine (T3) and 3',5'-diiodothyronine (3',5'-T2) to 3'-monoiodothyronine (3'-T1) via outer-ring deiodination (ORD). Catalyzes the deiodination of 3,3',5'-triiodothyronine (rT3) to 3,3'-diiodothyronine (3,3'-T2) via ORD. Catalyzes the phenolic ring deiodinations of 3,3',5'-triiodothyronamine and 3',5'- diiodothyronamine. This chain is Type II iodothyronine deiodinase (Dio2), found in Rattus norvegicus (Rat).